The sequence spans 484 residues: Oxysterol-binding protein-related protein 2 (484 aa).

Phosphoserine is present on residues S19 and S20. The disordered stretch occupies residues 35–61 (DLDTSKSTRSGKNGEKPQQENGIQKHR). A 1,2-diacyl-sn-glycero-3-phospho-(1D-myo-inositol-4,5-bisphosphate) contacts are provided by residues K90 and 178–179 (HH). 2 stretches are compositionally biased toward basic and acidic residues: residues 319-340 (KQEKRGDQARKAKMDDGPEKAN) and 424-450 (SQEKERLEEKQREARKERAKEDAEWRT). 2 disordered regions span residues 319-348 (KQEKRGDQARKAKMDDGPEKANSDVPGDVA) and 423-454 (ASQEKERLEEKQREARKERAKEDAEWRTRWFS). Residue 431–435 (EEKQR) participates in a 1,2-diacyl-sn-glycero-3-phospho-(1D-myo-inositol-4,5-bisphosphate) binding.

This sequence belongs to the OSBP family. In terms of assembly, monomer. Homotetramer; phosphatidylinositol-4,5-bisphosphate binding promotes formation of stable tetramers. Interacts with DIAPH1. In terms of tissue distribution, detected in cochlea, in inner and outer hair cells in the organ of Corti (at protein level).

The protein resides in the cytoplasm. The protein localises to the cytosol. It is found in the lipid droplet. Its subcellular location is the cell membrane. Intracellular transport protein that binds sterols and phospholipids and mediates lipid transport between intracellular compartments. Increases plasma membrane cholesterol levels and decreases phosphatidylinositol-4,5-bisphosphate levels in the cell membrane. Binds phosphoinositides, such as phosphatidylinositol-4,5-bisphosphate. Exhibits strong binding to phosphatidic acid and weak binding to phosphatidylinositol 3-phosphate. Binds cholesterol, dehydroergosterol, 22(R)-hydroxycholesterol and 25-hydroxycholesterol (in vitro). The protein is Oxysterol-binding protein-related protein 2 (Osbpl2) of Mus musculus (Mouse).